We begin with the raw amino-acid sequence, 160 residues long: Phosphopantetheine adenylyltransferase (160 aa).

Position 8 (serine 8) interacts with substrate. Residues 8-9 (SF) and histidine 16 each bind ATP. The substrate site is built by lysine 40, leucine 74, and lysine 88. Residues 89–91 (GLR), glutamate 99, and 124–130 (YSFVSST) contribute to the ATP site.

This sequence belongs to the bacterial CoaD family. As to quaternary structure, homohexamer. Mg(2+) is required as a cofactor.

Its subcellular location is the cytoplasm. The catalysed reaction is (R)-4'-phosphopantetheine + ATP + H(+) = 3'-dephospho-CoA + diphosphate. It participates in cofactor biosynthesis; coenzyme A biosynthesis; CoA from (R)-pantothenate: step 4/5. Reversibly transfers an adenylyl group from ATP to 4'-phosphopantetheine, yielding dephospho-CoA (dPCoA) and pyrophosphate. The chain is Phosphopantetheine adenylyltransferase from Thermus thermophilus (strain ATCC BAA-163 / DSM 7039 / HB27).